Reading from the N-terminus, the 721-residue chain is Polyribonucleotide nucleotidyltransferase (721 aa).

The Mg(2+) site is built by Asp495 and Asp501. In terms of domain architecture, KH spans 562 to 621 (PRLLSFRIDPELIGTVIGPGGRTIKGITERTNTKIDIEDSGIVTIASHDGAAAEEAQKII). Positions 631–699 (GEMFSGSITR…NRGRINLTLR (69 aa)) constitute an S1 motif domain. The segment at 700 to 721 (GVPQSGESTEVEPQPTPVAPLS) is disordered.

The protein belongs to the polyribonucleotide nucleotidyltransferase family. It depends on Mg(2+) as a cofactor.

It localises to the cytoplasm. It catalyses the reaction RNA(n+1) + phosphate = RNA(n) + a ribonucleoside 5'-diphosphate. Involved in mRNA degradation. Catalyzes the phosphorolysis of single-stranded polyribonucleotides processively in the 3'- to 5'-direction. The sequence is that of Polyribonucleotide nucleotidyltransferase from Synechococcus sp. (strain CC9902).